Reading from the N-terminus, the 686-residue chain is Zinc finger protein 7 (686 aa).

The KRAB domain occupies 4-76 (VTFGDVAVHF…DLQGAEGTEA (73 aa)). Residues K81 and K101 each participate in a glycyl lysine isopeptide (Lys-Gly) (interchain with G-Cter in SUMO2) cross-link. Phosphoserine occurs at positions 126 and 138. 6 C2H2-type zinc fingers span residues 223-245 (SRCQECQKKLSDCLQGKHTNNCH), 250-272 (YECAECGKVFRLCSQLNQHQRIH), 278-300 (FKCTECGKAFRLSSKLIQHQRIH), 306-328 (YRCEECGKAFGQSSSLIHHQRIH), 334-356 (YGCRECGKAFSQQSQLVRHQRTH), and 362-384 (YPCKECGKAFSQSSTLAQHQRMH). Glycyl lysine isopeptide (Lys-Gly) (interchain with G-Cter in SUMO2) cross-links involve residues K279 and K292. K393 participates in a covalent cross-link: Glycyl lysine isopeptide (Lys-Gly) (interchain with G-Cter in SUMO2). 9 consecutive C2H2-type zinc fingers follow at residues 413–435 (FKCDECGKAFRWISRLSQHQLIH), 441–463 (YKCNKCTKAFGCSSRLIRHQRTH), 469–491 (FKCDECGKGFVQGSHLIQHQRIH), 497–519 (YVCNDCGKAFSQSSSLIYHQRIH), 525–547 (YECLQCGKAFSMSTQLTIHQRVH), 553–575 (YKCNECGKAFSQNSTLFQHQIIH), 581–603 (YECSECGKAFSRSSYLIEHQRIH), 634–656 (HQCEDCEKIFRWRSHLIIHQRIH), and 662–684 (YKCNDCGKAFNRSSRLTQHQKIH).

This sequence belongs to the krueppel C2H2-type zinc-finger protein family.

The protein resides in the nucleus. Functionally, may be involved in transcriptional regulation. This is Zinc finger protein 7 (ZNF7) from Pongo abelii (Sumatran orangutan).